The primary structure comprises 246 residues: Heavy metal-associated isoprenylated plant protein 8 (246 aa).

The segment at 1–31 (MGKNKQNGESDNKSEKKNQKNGDSSVDKSDK) is disordered. An HMA 1 domain is found at 35-99 (CKEIVLKVYM…RVQKKFSRNA (65 aa)). A metal cation is bound by residues Cys46 and Cys49. A disordered region spans residues 96–122 (SRNAEMISPKHNPKQDQKEPQQKKESA). The segment covering 108-122 (PKQDQKEPQQKKESA) has biased composition (basic and acidic residues). An HMA 2 domain is found at 125 to 189 (IKTAILRMNM…IKKKLGKHAE (65 aa)). Cys136 and Cys139 together coordinate a metal cation. The segment at 191–226 (LSQITEKGKDNNKKNNNKKEESDGNKIFSYPPQYSS) is disordered. The segment covering 196–214 (EKGKDNNKKNNNKKEESDG) has biased composition (basic and acidic residues). Cysteine methyl ester is present on Cys243. Cys243 is lipidated: S-farnesyl cysteine. A propeptide spans 244-246 (SIM) (removed in mature form).

The protein belongs to the HIPP family.

Functionally, heavy-metal-binding protein. This is Heavy metal-associated isoprenylated plant protein 8 from Arabidopsis thaliana (Mouse-ear cress).